The following is a 123-amino-acid chain: Ig heavy chain V region H8 (123 aa).

The 114-residue stretch at 1 to 114 (EVKLVESGGG…BSYWYFDVWG (114 aa)) folds into the Ig-like domain.

The chain is Ig heavy chain V region H8 from Mus musculus (Mouse).